The sequence spans 73 residues: Conotoxin Cl9.2 (73 aa).

The N-terminal stretch at 1-18 (MSKLVILAVLVLLPLVTA) is a signal peptide. A propeptide spanning residues 19-41 (EHGRDEQAMQPEKKTMWTLWSLT) is cleaved from the precursor. Cystine bridges form between Cys46–Cys61, Cys52–Cys63, and Cys58–Cys72.

In terms of tissue distribution, expressed by the venom duct.

The protein localises to the secreted. The protein is Conotoxin Cl9.2 of Californiconus californicus (California cone).